The primary structure comprises 429 residues: Cyclin-B2-2 (429 aa).

The interval 66 to 98 (SQRKQESCDKKKLDSLHPSISRSQEETKKLKPS) is disordered. Residues 68 to 80 (RKQESCDKKKLDS) are compositionally biased toward basic and acidic residues.

This sequence belongs to the cyclin family. Cyclin AB subfamily. Interacts with CDC20-1 and CDC20-2. As to expression, expressed in roots.

The protein is Cyclin-B2-2 (CYCB2-2) of Arabidopsis thaliana (Mouse-ear cress).